A 631-amino-acid polypeptide reads, in one-letter code: DNA mismatch repair protein MutL (631 aa).

It belongs to the DNA mismatch repair MutL/HexB family.

Its function is as follows. This protein is involved in the repair of mismatches in DNA. It is required for dam-dependent methyl-directed DNA mismatch repair. May act as a 'molecular matchmaker', a protein that promotes the formation of a stable complex between two or more DNA-binding proteins in an ATP-dependent manner without itself being part of a final effector complex. The sequence is that of DNA mismatch repair protein MutL from Lactobacillus acidophilus (strain ATCC 700396 / NCK56 / N2 / NCFM).